Reading from the N-terminus, the 345-residue chain is Trace amine-associated receptor 6 (345 aa).

Over 1-32 the chain is Extracellular; sequence MGSNSSPPTVLQLCYENVTGSCVKTPYSPGSR. A glycan (N-linked (GlcNAc...) asparagine) is linked at Asn17. Intrachain disulfides connect Cys22-Cys186 and Cys105-Cys190. Residues 33–53 traverse the membrane as a helical segment; the sequence is VILYAVFGFGAVLAVFGNLMV. Over 54–68 the chain is Cytoplasmic; it reads MISILHFKQLHSPTN. The chain crosses the membrane as a helical span at residues 69-89; the sequence is FLIASLACADFGVGISVMPFS. Residues 90-107 lie on the Extracellular side of the membrane; it reads MVRSIESCWYFGRSFCTF. Residues 108-128 form a helical membrane-spanning segment; the sequence is HTCCDVAFCYSSLFHLSFISI. Topologically, residues 129-147 are cytoplasmic; the sequence is DRYIAVTDPLVYPTKFTVS. The chain crosses the membrane as a helical span at residues 148–168; sequence VSGICIGVSWILPLVYSGAVF. Over 169-202 the chain is Extracellular; sequence YTGVYDDGLEELSSALNCVGGCQVVVNQNWVLID. Residues 174–187 are extracellular Loop 2 (ECL2); sequence DDGLEELSSALNCV. Residues 203-223 traverse the membrane as a helical segment; it reads FLSFLIPTLVMIILYGNIFLV. The Cytoplasmic segment spans residues 224–259; that stretch reads ARQQAKKIENIGSKTESSSESYKARVARRERKAAKT. The helical transmembrane segment at 260 to 276 threads the bilayer; that stretch reads LGITVVAFMISWLPYSI. Over 277 to 282 the chain is Extracellular; the sequence is DSLVDA. The chain crosses the membrane as a helical span at residues 283-302; that stretch reads FMGFITPAYIYEICVWCAYY. At 303 to 345 the chain is on the cytoplasmic side; sequence NSAMNPLIYALFYPWFKKAIKVIMSGQVFKNSSATMNLFSEQI.

This sequence belongs to the G-protein coupled receptor 1 family. As to expression, specifically expressed in neurons of the olfactory epithelium, to discrete glomeruli predominantly localized to a confined bulb region. Present in a ventral area of the main olfactory epithelium.

Its subcellular location is the cell membrane. In terms of biological role, olfactory receptor specific for trace amines, such as beta-phenylethylamine (beta-PEA). Trace amine compounds are enriched in animal body fluids and act on trace amine-associated receptors (TAARs) to elicit both intraspecific and interspecific innate behaviors. Beta-PEA-binding causes a conformation change that triggers signaling via G(s)-class of G alpha proteins (GNAL or GNAS). This chain is Trace amine-associated receptor 6, found in Mus musculus (Mouse).